A 124-amino-acid chain; its full sequence is Large ribosomal subunit protein bL20c (124 aa).

The protein belongs to the bacterial ribosomal protein bL20 family.

The protein localises to the plastid. It localises to the chloroplast. Functionally, binds directly to 23S ribosomal RNA and is necessary for the in vitro assembly process of the 50S ribosomal subunit. It is not involved in the protein synthesizing functions of that subunit. The polypeptide is Large ribosomal subunit protein bL20c (rpl20) (Euglena gracilis).